A 545-amino-acid chain; its full sequence is Chaperonin GroEL (545 aa).

ATP contacts are provided by residues 30-33, lysine 51, 87-91, glycine 415, and aspartate 495; these read TLGP and DGTTT.

It belongs to the chaperonin (HSP60) family. As to quaternary structure, forms a cylinder of 14 subunits composed of two heptameric rings stacked back-to-back. Interacts with the co-chaperonin GroES.

The protein resides in the cytoplasm. The catalysed reaction is ATP + H2O + a folded polypeptide = ADP + phosphate + an unfolded polypeptide.. Its function is as follows. Together with its co-chaperonin GroES, plays an essential role in assisting protein folding. The GroEL-GroES system forms a nano-cage that allows encapsulation of the non-native substrate proteins and provides a physical environment optimized to promote and accelerate protein folding. This is Chaperonin GroEL from Shewanella oneidensis (strain ATCC 700550 / JCM 31522 / CIP 106686 / LMG 19005 / NCIMB 14063 / MR-1).